Consider the following 233-residue polypeptide: 6-carboxyhexanoate--CoA ligase (233 aa).

The protein belongs to the BioW family. In terms of assembly, homodimer. Mg(2+) serves as cofactor.

The enzyme catalyses heptanedioate + ATP + CoA = 6-carboxyhexanoyl-CoA + AMP + diphosphate. Its pathway is metabolic intermediate metabolism; pimeloyl-CoA biosynthesis; pimeloyl-CoA from pimelate: step 1/1. In terms of biological role, catalyzes the transformation of pimelate into pimeloyl-CoA with concomitant hydrolysis of ATP to AMP. This Methanocaldococcus sp. (strain FS406-22) protein is 6-carboxyhexanoate--CoA ligase.